A 116-amino-acid polypeptide reads, in one-letter code: uncharacterized protein (116 aa).

Positions 97–116 (AKGKGNEGREEAEEASGKSK) are disordered. A compositionally biased stretch (basic and acidic residues) spans 100-116 (KGNEGREEAEEASGKSK).

The protein belongs to the UPF0440 family.

This is an uncharacterized protein from Pyrococcus horikoshii (strain ATCC 700860 / DSM 12428 / JCM 9974 / NBRC 100139 / OT-3).